Consider the following 375-residue polypeptide: DNA replication and repair protein RecF (375 aa).

30–37 (GNNAQGKS) is an ATP binding site.

This sequence belongs to the RecF family.

The protein localises to the cytoplasm. Its function is as follows. The RecF protein is involved in DNA metabolism; it is required for DNA replication and normal SOS inducibility. RecF binds preferentially to single-stranded, linear DNA. It also seems to bind ATP. This chain is DNA replication and repair protein RecF, found in Microcystis aeruginosa (strain NIES-843 / IAM M-2473).